The following is a 96-amino-acid chain: SAGA-associated factor 11 (96 aa).

The SGF11-type zinc-finger motif lies at 68–89 (FHCKNCGRDVSANRFAAHLQRC).

This sequence belongs to the SGF11 family. As to quaternary structure, component of the 1.8 MDa SAGA transcription coactivator-HAT complex. SAGA is built of 5 distinct domains with specialized functions. Within the SAGA complex, SUS1, SGF11, SGF73 and UBP8 form an additional subcomplex of SAGA called the DUB module (deubiquitination module). Interacts directly with SGF73, SUS1 and UBP8.

Its subcellular location is the nucleus. Functions as a component of the transcription regulatory histone acetylation (HAT) complex SAGA. At the promoters, SAGA is required for recruitment of the basal transcription machinery. It influences RNA polymerase II transcriptional activity through different activities such as TBP interaction and promoter selectivity, interaction with transcription activators, and chromatin modification through histone acetylation and deubiquitination. SAGA acetylates nucleosomal histone H3 to some extent (to form H3K9ac, H3K14ac, H3K18ac and H3K23ac). SAGA interacts with DNA via upstream activating sequences (UASs). Involved in transcriptional regulation of a subset of SAGA-regulated genes. Within the SAGA complex, participates in a subcomplex, that specifically deubiquitinates histones H2B. This chain is SAGA-associated factor 11, found in Vanderwaltozyma polyspora (strain ATCC 22028 / DSM 70294 / BCRC 21397 / CBS 2163 / NBRC 10782 / NRRL Y-8283 / UCD 57-17) (Kluyveromyces polysporus).